Reading from the N-terminus, the 198-residue chain is uncharacterized protein (198 aa).

This sequence to A.aeolicus aq_1211 and aq_1583.

This is an uncharacterized protein from Aquifex aeolicus (strain VF5).